Here is a 242-residue protein sequence, read N- to C-terminus: Small ribosomal subunit protein uS2 (242 aa).

Belongs to the universal ribosomal protein uS2 family.

This chain is Small ribosomal subunit protein uS2, found in Shewanella halifaxensis (strain HAW-EB4).